A 247-amino-acid chain; its full sequence is Probable transcriptional regulatory protein MS0710 (247 aa).

It belongs to the TACO1 family.

It is found in the cytoplasm. The sequence is that of Probable transcriptional regulatory protein MS0710 from Mannheimia succiniciproducens (strain KCTC 0769BP / MBEL55E).